A 199-amino-acid chain; its full sequence is Recombination protein RecR (199 aa).

The C4-type zinc finger occupies 57–72 (CQSCRTYTEESLCPIC). A Toprim domain is found at 81–176 (STICVVETPA…VISRIAHGVP (96 aa)).

It belongs to the RecR family.

In terms of biological role, may play a role in DNA repair. It seems to be involved in an RecBC-independent recombinational process of DNA repair. It may act with RecF and RecO. The polypeptide is Recombination protein RecR (Shewanella sp. (strain ANA-3)).